The chain runs to 391 residues: Succinate--CoA ligase [ADP-forming] subunit beta (391 aa).

The region spanning 9–248 is the ATP-grasp domain; the sequence is KDILRKFGVA…ISEEDPFEVE (240 aa). ATP contacts are provided by residues K50, 57–59, E103, M106, and E111; that span reads GRG. Mg(2+)-binding residues include N203 and D217. Residues N268 and 325–327 each bind substrate; that span reads GIV.

Belongs to the succinate/malate CoA ligase beta subunit family. As to quaternary structure, heterotetramer of two alpha and two beta subunits. Mg(2+) serves as cofactor.

It catalyses the reaction succinate + ATP + CoA = succinyl-CoA + ADP + phosphate. It carries out the reaction GTP + succinate + CoA = succinyl-CoA + GDP + phosphate. It functions in the pathway carbohydrate metabolism; tricarboxylic acid cycle; succinate from succinyl-CoA (ligase route): step 1/1. In terms of biological role, succinyl-CoA synthetase functions in the citric acid cycle (TCA), coupling the hydrolysis of succinyl-CoA to the synthesis of either ATP or GTP and thus represents the only step of substrate-level phosphorylation in the TCA. The beta subunit provides nucleotide specificity of the enzyme and binds the substrate succinate, while the binding sites for coenzyme A and phosphate are found in the alpha subunit. The sequence is that of Succinate--CoA ligase [ADP-forming] subunit beta from Chlorobium luteolum (strain DSM 273 / BCRC 81028 / 2530) (Pelodictyon luteolum).